The chain runs to 175 residues: Shikimate kinase (175 aa).

12–17 (GAGKTT) lines the ATP pocket. Thr16 provides a ligand contact to Mg(2+). Residues Asp34, Arg58, and Gly80 each coordinate substrate. ATP is bound at residue Arg117. Arg136 is a binding site for substrate.

Belongs to the shikimate kinase family. Monomer. It depends on Mg(2+) as a cofactor.

It is found in the cytoplasm. The enzyme catalyses shikimate + ATP = 3-phosphoshikimate + ADP + H(+). Its pathway is metabolic intermediate biosynthesis; chorismate biosynthesis; chorismate from D-erythrose 4-phosphate and phosphoenolpyruvate: step 5/7. Functionally, catalyzes the specific phosphorylation of the 3-hydroxyl group of shikimic acid using ATP as a cosubstrate. This chain is Shikimate kinase, found in Saccharopolyspora erythraea (strain ATCC 11635 / DSM 40517 / JCM 4748 / NBRC 13426 / NCIMB 8594 / NRRL 2338).